We begin with the raw amino-acid sequence, 232 residues long: Phosphate import ATP-binding protein PstB (232 aa).

Residues 1–227 (MFNINMEIKE…PKDRRTENYI (227 aa)) form the ABC transporter domain. Position 18–25 (18–25 (GPSGCGKT)) interacts with ATP.

It belongs to the ABC transporter superfamily. Phosphate importer (TC 3.A.1.7) family. The complex is composed of two ATP-binding proteins (PstB), two transmembrane proteins (PstC and PstA) and a solute-binding protein (PstS).

The protein resides in the cell membrane. It catalyses the reaction phosphate(out) + ATP + H2O = ADP + 2 phosphate(in) + H(+). In terms of biological role, part of the ABC transporter complex PstSACB involved in phosphate import. Responsible for energy coupling to the transport system. This is Phosphate import ATP-binding protein PstB from Mycoplasma mycoides subsp. mycoides SC (strain CCUG 32753 / NCTC 10114 / PG1).